The primary structure comprises 298 residues: Bifunctional protein FolD (298 aa).

NADP(+) is bound by residues 167-169, Ser-192, and Ile-233; that span reads GRS.

Belongs to the tetrahydrofolate dehydrogenase/cyclohydrolase family. In terms of assembly, homodimer.

It catalyses the reaction (6R)-5,10-methylene-5,6,7,8-tetrahydrofolate + NADP(+) = (6R)-5,10-methenyltetrahydrofolate + NADPH. The enzyme catalyses (6R)-5,10-methenyltetrahydrofolate + H2O = (6R)-10-formyltetrahydrofolate + H(+). It participates in one-carbon metabolism; tetrahydrofolate interconversion. Its function is as follows. Catalyzes the oxidation of 5,10-methylenetetrahydrofolate to 5,10-methenyltetrahydrofolate and then the hydrolysis of 5,10-methenyltetrahydrofolate to 10-formyltetrahydrofolate. The protein is Bifunctional protein FolD of Caulobacter sp. (strain K31).